A 107-amino-acid polypeptide reads, in one-letter code: Phosphoribosyl-ATP pyrophosphatase (107 aa).

It belongs to the PRA-PH family.

It localises to the cytoplasm. It carries out the reaction 1-(5-phospho-beta-D-ribosyl)-ATP + H2O = 1-(5-phospho-beta-D-ribosyl)-5'-AMP + diphosphate + H(+). It participates in amino-acid biosynthesis; L-histidine biosynthesis; L-histidine from 5-phospho-alpha-D-ribose 1-diphosphate: step 2/9. This is Phosphoribosyl-ATP pyrophosphatase from Bacillus cereus (strain Q1).